We begin with the raw amino-acid sequence, 152 residues long: Protein Smg homolog (152 aa).

This sequence belongs to the Smg family.

This chain is Protein Smg homolog, found in Bordetella petrii (strain ATCC BAA-461 / DSM 12804 / CCUG 43448).